The chain runs to 691 residues: Amino-acid acetyltransferase, mitochondrial (691 aa).

Over residues 1–27 (MSSTSLAWPRTAKSSLLQSADFSSTSK) the composition is skewed to polar residues. Disordered regions lie at residues 1–29 (MSSTSLAWPRTAKSSLLQSADFSSTSKGY) and 65–95 (RLKAQHSPKPQVKEPEKESKDDAPQPLPSGV). Residues 75 to 87 (QVKEPEKESKDDA) are compositionally biased toward basic and acidic residues. The N-acetyltransferase domain occupies 512 to 681 (NRPRMSLDDP…YEAVCRSIQP (170 aa)).

It belongs to the acetyltransferase family.

The protein localises to the mitochondrion. It catalyses the reaction L-glutamate + acetyl-CoA = N-acetyl-L-glutamate + CoA + H(+). It functions in the pathway amino-acid biosynthesis; L-arginine biosynthesis; N(2)-acetyl-L-ornithine from L-glutamate: step 1/4. N-acetylglutamate synthase involved in arginine biosynthesis. This is Amino-acid acetyltransferase, mitochondrial (arg2) from Aspergillus terreus (strain NIH 2624 / FGSC A1156).